Consider the following 440-residue polypeptide: Serine/threonine-protein kinase STK11 (440 aa).

One can recognise a Protein kinase domain in the interval 49–309 (YLMGDLLGEG…IQQIRQHNWF (261 aa)). Residues 55-63 (LGEGSYGKV) and K78 contribute to the ATP site. Catalysis depends on D176, which acts as the Proton acceptor. A phosphothreonine; by autocatalysis mark is found at T336 and T365. The tract at residues 370-440 (VPGQVPEEEA…IRKLSTCKQQ (71 aa)) is disordered. Basic residues predominate over residues 430–440 (KIRKLSTCKQQ). Position 435 is a phosphoserine; by PKA (S435).

It belongs to the protein kinase superfamily. CAMK Ser/Thr protein kinase family. LKB1 subfamily. In terms of assembly, catalytic component of a trimeric complex composed of STK11/LKB1, STRAD (STRADA or STRADB) and CAB39/MO25 (CAB39/MO25alpha or CAB39L/MO25beta). Requires Mg(2+) as cofactor. Mn(2+) serves as cofactor. Ubiquitously expressed in all tissues tested. High levels were observed in duodenum and skeletal muscle, lower levels in liver and pancreas.

Its subcellular location is the nucleus. It localises to the cytoplasm. The enzyme catalyses L-seryl-[protein] + ATP = O-phospho-L-seryl-[protein] + ADP + H(+). The catalysed reaction is L-threonyl-[protein] + ATP = O-phospho-L-threonyl-[protein] + ADP + H(+). In terms of biological role, tumor suppressor serine/threonine-protein kinase that controls the activity of AMP-activated protein kinase (AMPK) family members, thereby playing a role in various processes such as cell metabolism, cell polarity, apoptosis and DNA damage response. Acts by phosphorylating the T-loop of AMPK family proteins, leading to promote their activity. This is Serine/threonine-protein kinase STK11 from Gallus gallus (Chicken).